Reading from the N-terminus, the 809-residue chain is Spindle pole body component alp14 (809 aa).

2 HEAT repeats span residues 127-164 (DSAA…QFGA) and 167-204 (IPSK…WTGD). Disordered regions lie at residues 233–274 (PPKQ…SDDQ), 507–608 (AKAP…SGAL), and 619–638 (ELDD…RYEH). Residues 239-253 (FLKSQQPTSEPNVET) show a composition bias toward polar residues. Acidic residues predominate over residues 262–274 (ENEESEPEPSDDQ). Residues 509–518 (APTKKSKVKP) show a composition bias toward basic residues. Composition is skewed to low complexity over residues 526 to 551 (VVVP…SPRK) and 582 to 595 (SRGL…SLQQ). Residues serine 543 and serine 548 each carry the phosphoserine modification. Residues 597–608 (VKASTPLNSGAL) show a composition bias toward polar residues. A coiled-coil region spans residues 637–697 (EHPKVLEDND…NTLRSARKAS (61 aa)). Phosphoserine is present on residues serine 697 and serine 720.

Belongs to the TOG/XMAP215 family. As to quaternary structure, interacts with alp14.

It is found in the cytoplasm. It localises to the cytoskeleton. The protein localises to the microtubule organizing center. The protein resides in the spindle pole body. Its subcellular location is the chromosome. It is found in the centromere. It localises to the kinetochore. Its function is as follows. Required for bipolar spindle formation and proper chromosome segregation. Has a role in connecting the kinetochores and the plus end of pole to chromosome microtubules. Also required for the activation of the spindle checkpoint pathway. In Schizosaccharomyces pombe (strain 972 / ATCC 24843) (Fission yeast), this protein is Spindle pole body component alp14 (alp14).